The chain runs to 192 residues: Xanthine phosphoribosyltransferase (192 aa).

Residues Leu20 and Asn27 each coordinate xanthine. Ala128 to Ala132 is a 5-phospho-alpha-D-ribose 1-diphosphate binding site. Lys156 provides a ligand contact to xanthine.

This sequence belongs to the purine/pyrimidine phosphoribosyltransferase family. Xpt subfamily. In terms of assembly, homodimer.

It localises to the cytoplasm. It catalyses the reaction XMP + diphosphate = xanthine + 5-phospho-alpha-D-ribose 1-diphosphate. Its pathway is purine metabolism; XMP biosynthesis via salvage pathway; XMP from xanthine: step 1/1. In terms of biological role, converts the preformed base xanthine, a product of nucleic acid breakdown, to xanthosine 5'-monophosphate (XMP), so it can be reused for RNA or DNA synthesis. This is Xanthine phosphoribosyltransferase from Lactobacillus gasseri (strain ATCC 33323 / DSM 20243 / BCRC 14619 / CIP 102991 / JCM 1131 / KCTC 3163 / NCIMB 11718 / NCTC 13722 / AM63).